A 272-amino-acid polypeptide reads, in one-letter code: Putative hydro-lyase Rpal_1947 (272 aa).

This sequence belongs to the D-glutamate cyclase family.

The chain is Putative hydro-lyase Rpal_1947 from Rhodopseudomonas palustris (strain TIE-1).